The following is a 386-amino-acid chain: MFAEIQIQDKDRMGTAGKVIKCKAAVLWEQKQPFSIEEIEVAPPKTKEVRIKILATGICRTDDHVIKGTMVSKFPVIVGHEATGIVESIGEGVTTVKPGDKVIPLFLPQCRECNACRNPDGNLCIRSDITGRGVLADGTTRFTCKGKPVHHFMNTSTFTEYTVVDESSVAKIDDAAPPEKVCLIGCGFSTGYGAAVKTGKVKPGSTCVVFGLGGVGLSVIMGCKSAGASRIIGIDLNKDKFEKAMAVGATECISPKDSTKPISEVLSEMTGNNVGYTFEVIGHLETMIDALASCHMNYGTSVVVGVPPSAKMLTYDPMLLFTGRTWKGCVFGGLKSRDDVPKLVTEFLAKKFDLDQLITHVLPFKKISEGFELLNSGQSIRTVLTF.

C59 provides a ligand contact to Zn(2+). Position 60–64 (60–64 (RTDDH)) interacts with NAD(+). H80, C110, C113, C116, C124, and C186 together coordinate Zn(2+). NAD(+)-binding positions include 211–216 (GLGGVG), D235, K240, 281–283 (IGH), 304–306 (VGV), 329–331 (CVF), and R381.

The protein belongs to the zinc-containing alcohol dehydrogenase family. Class-IV subfamily. As to quaternary structure, homodimer. Requires Zn(2+) as cofactor. As to expression, preferentially expressed in stomach.

It localises to the cytoplasm. It catalyses the reaction a primary alcohol + NAD(+) = an aldehyde + NADH + H(+). The enzyme catalyses 10-hydroxydecanoate + NAD(+) = 10-oxodecanoate + NADH + H(+). The catalysed reaction is all-trans-retinol + NAD(+) = all-trans-retinal + NADH + H(+). It carries out the reaction 9-cis-retinol + NAD(+) = 9-cis-retinal + NADH + H(+). It catalyses the reaction all-trans-3,4-didehydroretinol + NAD(+) = all-trans-3,4-didehydroretinal + NADH + H(+). The enzyme catalyses all-trans-4-hydroxyretinol + NAD(+) = all-trans-4-hydroxyretinal + NADH + H(+). The catalysed reaction is all-trans-4-oxoretinol + NAD(+) = all-trans-4-oxoretinal + NADH + H(+). It carries out the reaction 12-hydroxydodecanoate + NAD(+) = 12-oxododecanoate + NADH + H(+). It catalyses the reaction 16-hydroxyhexadecanoate + NAD(+) = 16-oxohexadecanoate + NADH + H(+). The enzyme catalyses hexan-1-ol + NAD(+) = hexanal + NADH + H(+). The catalysed reaction is (E)-hex-2-en-1-ol + NAD(+) = (E)-hex-2-enal + NADH + H(+). It carries out the reaction (E)-4-hydroxynon-2-en-1-ol + NAD(+) = (E)-4-hydroxynon-2-enal + NADH + H(+). Retinol oxidation is inhibited by the detergent Tween 80. Ethanol inhibits both all-trans-retinol and 9-cis-retinol oxidation. 13-cis-retinol is an effective competitive inhibitor of the 9-cis-retinol oxidation. All-trans-retinoic acid is a powerful inhibitor of all-trans-retinol oxidation. 13-cis-retinoic acid is a powerful inhibitor of all-trans-retinol oxidation. Cimetidine competitively inhibited ethanol oxidation. In terms of biological role, catalyzes the NAD-dependent oxidation of all-trans-retinol, alcohol, and omega-hydroxy fatty acids and their derivatives. Oxidizes preferentially all trans-retinol, all-trans-4-hydroxyretinol, 9-cis-retinol, 2-hexenol, and long chain omega-hydroxy fatty acids such as juniperic acid. In vitro can also catalyze the NADH-dependent reduction of all-trans-retinal and aldehydes and their derivatives. Reduces preferentially all trans-retinal, all-trans-4-oxoretinal and hexanal. Catalyzes in the oxidative direction with higher efficiency. Therefore may participate in retinoid metabolism, fatty acid omega-oxidation, and elimination of cytotoxic aldehydes produced by lipid peroxidation. This is All-trans-retinol dehydrogenase [NAD(+)] ADH7 from Homo sapiens (Human).